A 592-amino-acid chain; its full sequence is Glutathione-regulated potassium-efflux system protein KefB (592 aa).

Helical transmembrane passes span 4 to 24 (SDFL…VPLA), 29 to 49 (IGAV…GLGF), 55 to 75 (EILH…GLEL), 87 to 107 (IFGV…GLLM), 115 to 135 (AAVV…LQLM), 152 to 172 (VLLF…LLAG), 177 to 197 (HFDW…LIGG), 207 to 227 (FIAA…LVLG), 230 to 250 (LFMD…GVLL), 268 to 288 (GLLL…GVLY), 291 to 311 (LLWV…VLYL), 324 to 344 (MQFA…FSTA), and 356 to 376 (ALLL…MKLV). Residues 400-519 (KPQVIVVGFG…AGVTQFSRET (120 aa)) form the RCK N-terminal domain.

The protein belongs to the monovalent cation:proton antiporter 2 (CPA2) transporter (TC 2.A.37) family. KefB subfamily. Interacts with the regulatory subunit KefG.

It is found in the cell inner membrane. Functionally, pore-forming subunit of a potassium efflux system that confers protection against electrophiles. Catalyzes K(+)/H(+) antiport. The polypeptide is Glutathione-regulated potassium-efflux system protein KefB (Escherichia coli O157:H7).